A 256-amino-acid polypeptide reads, in one-letter code: Carboxysome shell protein CsoS1D (256 aa).

The disordered stretch occupies residues 1 to 24; the sequence is MEPTSSLNRGDRKKGSSLVTGSEV. BMC circularly permuted domains lie at 55–157 and 158–256; these read ELRT…RTKP and STSW…ISNY. The Gates the pore signature appears at 120 to 121; it reads ER.

The protein belongs to the EutL/PduB family. As to quaternary structure, homotrimer. Forms a dimer of stacked trimers, the same faces interact. A CsoS1-CsoS1D-CsoS2 complex can be isolated following expression in E.coli.

The protein resides in the carboxysome. Its function is as follows. Part of the carboxysome shell, a polyhedral inclusion where RuBisCO (ribulose bisphosphate carboxylase, cbbL-cbbS) is sequestered. It may control transport of RuBisCO reactants in and out of the carboxysome. There are estimated to be 6 CsoS1D hexamers per carboxysome. The polypeptide is Carboxysome shell protein CsoS1D (Prochlorococcus marinus subsp. pastoris (strain CCMP1986 / NIES-2087 / MED4)).